The following is a 210-amino-acid chain: Transcriptional regulator GfcR (210 aa).

The disordered stretch occupies residues 39–60 (VERSGAATEPEPRAEPEGPDDI). Residues 48–60 (PEPRAEPEGPDDI) show a composition bias toward basic and acidic residues.

It belongs to the purine/pyrimidine phosphoribosyltransferase family. GfcR subfamily.

Its activity is regulated as follows. Interaction with effectors modulates GfcR activity. 2-keto-3-deoxy-6-phosphogluconate (KDPG), fructose-1,6-bisphosphate (FBP), 2-keto-3-deoxy-6-phosphogalactonate (KDPGal) and glycerol-3-phosphate (G3P), which are intermediates of sugar and glycerol degradation pathways, can act as inducer molecules. Functionally, DNA-binding transcriptional regulator that functions as a regulator of central sugar catabolic pathways. Is both a local regulator of specific steps in the pathways for D-glucose and D-fructose degradation and a global regulator of hexose catabolism. In the presence of D-glucose, activates expression of the gene encoding the gluconate dehydratase (gad), which is involved in D-glucose catabolism via the semiphosphorylative Entner-Doudoroff (spED) pathway. In the presence of D-fructose, activates expression of the genes encoding the PTS system EIIC component (ptfC) and the fructose-1,6-bisphosphate aldolase (fba), which are involved in D-fructose uptake and degradation via the modified Embden-Meyerhof pathway. In addition, in the presence of D-glucose, D-fructose, D-galactose or glycerol, it activates expression of the genes encoding glyceraldehyde-3-phosphate dehydrogenase (gap) and pyruvate kinase (pykA), enzymes common to all four degradation pathways. Acts by binding directly to the promoter region of the regulated genes. The protein is Transcriptional regulator GfcR of Haloferax volcanii (strain ATCC 29605 / DSM 3757 / JCM 8879 / NBRC 14742 / NCIMB 2012 / VKM B-1768 / DS2) (Halobacterium volcanii).